A 1696-amino-acid polypeptide reads, in one-letter code: MPPAIVILALFTAALCAVNLRTVAADGPRIYRNEWALHVEGGTAAADRLASKHGFINKGQIGSLEDHYLFVHRRTWKRSLRSSSHRHALLQREPEVRWLQQQVVKRRVKRRVKRVYSMYPWEQRVQHSSPQVNNPAQQDNLWDPHFNDEKWDKMWYLHCDRPEFACQWSDMNVEAAWKKGYTGKGVVVSILDDGSETDHPDLAGNYDPDASSDINGGTLDPTPRYEYTNENRHGTRCAGEVAAMGNNSFCSVGVAYKASIGGVRMLDGDVTDSVEAASLGLNPQHIMIYSASWGPDDDGKTVDGPANLAQKTFQAGAENGRDKLGSIFVWASGNGGRTHDSCGCDGYTNSIYTISVSSASEQGKVPWYLEPCASTLATTYSSGAPHERKVITTDLRKGCTESHTGTSASAPMAAGILALALEANPMLTWRDMQYIVVMAANPSPLDRDTESAYPRDPRKESDFVTNGAGLRVSHNFGFGLMDAGKMVELAESWRRVPEQHVCEEDPNAQQRAITKGETIVDTKTTGGCNGTDHHVKYLEHVVVEISLDHPCRGHLSIHITSPSGTRSTLLPERQFDSSSDGLKDWAFMTTHCWGEQPEGDWILEVKDLGQQNCQRYGLRTVLPVLRKWKLILYGTAEHPLYKRDEESRPHTPQTREEPTDEEECEDGDYYDRSKQRCRHCHDSCATCHGRHSGQCLSCHEGNYFVEDEGTCSEECGQGYYKDEEERKCLDCSADCLTCQVSADHCTSCDDEDGLKLFENTCVAQCSEGRYMDENDVCQDCDDSCDTCTGPDATDCVTCADEDLLQESQCVESCSSGYFQQEYECLKCHATCASCSGSRDDQCLTCSGHLELDEDTHRCITSCEDGEYGTEEGKCEDCNIICKKCNGSQADQCLECHHDTNLYDTTCVQYCGNRRYPENGECHPCHPSCLGCIGGEINQCNQCITDYEGEDHFLYQGTCHVTCPPGLYGDTTDQVCKACAPGCIACDGPADNQCTLCEEERAPTDGRCQSEGSQTDEAECAEGCHSCEEGPDICDSCDEDYYLTEDTCVRRTNCPSFTYPDDQDRECRPCHDNCEACDGPNNQNCNSCKEGFYKTPDGCSTGCPNRYYKDDTNKECKPCDSSCFTCSGPASFHCLSCADGDFLHESSCRSTCPAGFIGNAESHECVESSCEQDQYYSSETGRCEDCPYNCRACDNDGDCAECAPTYIVVDGRCRPEETCEDGEYQDRDRDTAELSCRPCHQSCKTCSGPSDTDCDSCKGDDTILDRGECITSCGPGEYMDRREKKCKACHPTCKECSDEYDDTCTACNDGFLLTDASSCEAGCPPGQFLHHGDCDSCHRECKTCDGPHHDNCLSCQPGSYLNDQQCSTHCPEGTFEETYEDDSGETVLQCRLCHVNCKTCHGEGEEDCMECANDIKYKQDGRCVTECQEGHYPDLTNECQQCWSDCETCDGPRNDQCVTCPYNYYLVLGKCLEDCPEGYYDTMRQEKECGECHPSCATCNEGGNYNCLSCPYGSKLGEGVCYPMCEEHEYYVEKTQICEECDNSCKTCRGSTAHDCLSCEAPYGYHAMKHLCTACCEEGSPENEYCCICHESTRLCITDREAEGVQFSSADSIPTNVAYIAVATFICVVIVVLFFVVFGMLQARSNGRLCWAHKYQQVPTTRYEKMNDHVNILSQEDFYNEDSLSEDEIHSIDSTRH.

Residues 1 to 25 (MPPAIVILALFTAALCAVNLRTVAA) form the signal peptide. Positions 26–110 (DGPRIYRNEW…QQVVKRRVKR (85 aa)) are excised as a propeptide. Residues 111-488 (RVKRVYSMYP…GLMDAGKMVE (378 aa)) form a catalytic region. Residues 111-1618 (RVKRVYSMYP…ADSIPTNVAY (1508 aa)) are Extracellular-facing. The Peptidase S8 domain maps to 167–487 (QWSDMNVEAA…FGLMDAGKMV (321 aa)). Active-site charge relay system residues include aspartate 192 and histidine 233. N-linked (GlcNAc...) asparagine glycosylation is present at asparagine 246. The active-site Charge relay system is the serine 407. The P/Homo B domain maps to 495-638 (RVPEQHVCEE…KLILYGTAEH (144 aa)). A glycan (N-linked (GlcNAc...) asparagine) is linked at asparagine 529. The span at 643–657 (RDEESRPHTPQTREE) shows a compositional bias: basic and acidic residues. Positions 643-666 (RDEESRPHTPQTREEPTDEEECED) are disordered. Residues 664–1649 (CEDGDYYDRS…LQARSNGRLC (986 aa)) form a CRM (Cys-rich motif) region. A glycan (N-linked (GlcNAc...) asparagine) is linked at asparagine 885. A helical membrane pass occupies residues 1619–1639 (IAVATFICVVIVVLFFVVFGM). Residues 1640–1696 (LQARSNGRLCWAHKYQQVPTTRYEKMNDHVNILSQEDFYNEDSLSEDEIHSIDSTRH) are Cytoplasmic-facing.

Belongs to the peptidase S8 family.

The protein localises to the secreted. It localises to the cell membrane. In terms of biological role, serine endoprotease that processes various proproteins by cleavage at paired basic amino acids, recognizing the RXXX[KR]R consensus motif. Likely functions in the constitutive and regulated secretory pathways. This is Proprotein convertase subtilisin/kexin type 5 (PC6) from Branchiostoma californiense (California lancelet).